An 89-amino-acid chain; its full sequence is Abortive infection protein (89 aa).

The protein resides in the cell membrane. Its function is as follows. ABI may interact with a target in the cell membrane, which could be the product of the host's cmrA gene, and cause disruption of the cellular membrane such that lysis of the infected cell and death of the infecting phage would result. This is Abortive infection protein (abi) from Escherichia coli.